Here is a 183-residue protein sequence, read N- to C-terminus: Endoribonuclease AbiQ (183 aa).

Belongs to the ToxN/AbiQ toxin family. As to quaternary structure, forms a triangular heterohexamer with a single 35-nt-long repeat of RNA antitoxin AntiQ.

The protein resides in the cytoplasm. In terms of biological role, toxic component of a type III toxin-antitoxin (TA) system. An endoribonuclease that is probably sequence-specific. It is neutralized by its cognate antitoxin RNA AntiQ, which has 2.8 35 nucleotide-long repeats. Cannot be cloned in L.lactis subsp. cremoris strain NZ9000 in the absence of the antitoxin gene; expression in strain NZ9000 even in the presence of antiQ inhibits growth in a bacteriostatic fashion. Confers resistance to 936 and c2 phages but not P335 phages in L.lactis, causes an abortive infection (Abi phenotype). Viral DNA is replicated but not cleaved from its concatemeric form, while the viral major structural protein is produced normally in the presence of this protein. Operon expression in E.coli confers resistance to 3 phages of the Myoviridae family (T4, RB69 and phage 2) and 1 of the Siphoviridae family (T5), but not other tested phages (T1, T3, lambda vir, HK97, Mu and pilH alpha). The presence of this operon in L.lactis subsp. lactis strain IL1403 during phage P008 infection alters the viral transcription profiles. The chain is Endoribonuclease AbiQ from Lactococcus lactis subsp. lactis (Streptococcus lactis).